The sequence spans 213 residues: Thymidylate kinase (213 aa).

Residue 7–14 coordinates ATP; that stretch reads GMDGSGKT.

Belongs to the thymidylate kinase family.

The catalysed reaction is dTMP + ATP = dTDP + ADP. Phosphorylation of dTMP to form dTDP in both de novo and salvage pathways of dTTP synthesis. This is Thymidylate kinase from Mycoplasma capricolum subsp. capricolum (strain California kid / ATCC 27343 / NCTC 10154).